An 842-amino-acid chain; its full sequence is Elongation factor 2 (842 aa).

A tr-type G domain is found at threonine 17 to valine 346. GTP contacts are provided by residues alanine 26–serine 33, asparagine 158–aspartate 161, and serine 213–leucine 215. An N6,N6,N6-trimethyllysine; by EFM3; alternate modification is found at lysine 509. Lysine 509 bears the N6,N6-dimethyllysine; by EFM3; alternate mark. Residue lysine 509 is modified to N6-methyllysine; by EFM3; alternate. A Phosphoserine modification is found at serine 579. Position 613 is an N6,N6-dimethyllysine; by EFM2; alternate (lysine 613). At lysine 613 the chain carries N6-methyllysine; by EFM2; alternate. The residue at position 699 (histidine 699) is a Diphthamide. A phosphothreonine mark is found at threonine 713 and threonine 763. Lysine 841 is covalently cross-linked (Glycyl lysine isopeptide (Lys-Gly) (interchain with G-Cter in ubiquitin)).

Belongs to the TRAFAC class translation factor GTPase superfamily. Classic translation factor GTPase family. EF-G/EF-2 subfamily. As to quaternary structure, binds to 80S ribosomes. Actively translating ribosomes show mutually exclusive binding of eIF5a (HYP2 or ANB1) and EFT1/eEF2. Interacts with the 40S ribosomal subunit protein RPL9A; the interaction is direct. Interacts with the 60S ribosomal subunit proteins RPL12A; the interaction is direct. Interacts with RPS23A; the interaction is direct. Interacts with 18S rRNA; the interaction is direct. Interacts with 25S rRNA; the interaction is direct. Interacts with RPL0. Interacts with STM1; promoting ribosome inactivation. In terms of processing, (Microbial infection) Diphthamide can be ADP-ribosylated by diphtheria toxin and by Pseudomonas exotoxin A, thus abolishing its function.

It is found in the cytoplasm. The catalysed reaction is GTP + H2O = GDP + phosphate + H(+). Its pathway is protein biosynthesis; polypeptide chain elongation. Its activity is regulated as follows. Inhibited by fusidic acid and sordarin, which prevent the release of eEF2 from the ribosome after the translocation step. While fusidic acid acts on all eukaryotic eEF2, sordarin specifically binds and inhibits only selected fungal eEF2. In terms of biological role, catalyzes the GTP-dependent ribosomal translocation step during translation elongation. During this step, the ribosome changes from the pre-translocational (PRE) to the post-translocational (POST) state as the newly formed A-site-bound peptidyl-tRNA and P-site-bound deacylated tRNA move to the P and E sites, respectively. Catalyzes the coordinated movement of the two tRNA molecules, the mRNA and conformational changes in the ribosome. This Saccharomyces cerevisiae (strain ATCC 204508 / S288c) (Baker's yeast) protein is Elongation factor 2 (EFT1).